We begin with the raw amino-acid sequence, 166 residues long: Interferon gamma (166 aa).

An N-terminal signal peptide occupies residues 1 to 23 (MKYTSYILAFQLCIVLGSLGCYC). Gln-24 bears the Pyrrolidone carboxylic acid mark. Asn-48 is a glycosylation site (N-linked (GlcNAc...) asparagine). Residue Asn-120 is glycosylated (N-linked (GlcNAc...) asparagine; in dimeric form). Positions 147-166 (AKTGKRKRSQMLFRGRRASQ) are disordered. A compositionally biased stretch (basic residues) spans 149–166 (TGKRKRSQMLFRGRRASQ). A propeptide spanning residues 162 to 166 (RRASQ) is cleaved from the precursor.

Belongs to the type II (or gamma) interferon family. Homodimer. Interacts with IFNGR1 (via extracellular domain); this interaction promotes IFNGR1 dimerization. Post-translationally, proteolytic processing produces C-terminal heterogeneity, with proteins ending alternatively at Gly-150, Met-157 or Gly-161. As to expression, released primarily from activated T lymphocytes.

It is found in the secreted. Functionally, type II interferon produced by immune cells such as T-cells and NK cells that plays crucial roles in antimicrobial, antiviral, and antitumor responses by activating effector immune cells and enhancing antigen presentation. Primarily signals through the JAK-STAT pathway after interaction with its receptor IFNGR1 to affect gene regulation. Upon IFNG binding, IFNGR1 intracellular domain opens out to allow association of downstream signaling components JAK2, JAK1 and STAT1, leading to STAT1 activation, nuclear translocation and transcription of IFNG-regulated genes. Many of the induced genes are transcription factors such as IRF1 that are able to further drive regulation of a next wave of transcription. Plays a role in class I antigen presentation pathway by inducing a replacement of catalytic proteasome subunits with immunoproteasome subunits. In turn, increases the quantity, quality, and repertoire of peptides for class I MHC loading. Increases the efficiency of peptide generation also by inducing the expression of activator PA28 that associates with the proteasome and alters its proteolytic cleavage preference. Up-regulates as well MHC II complexes on the cell surface by promoting expression of several key molecules such as cathepsins B/CTSB, H/CTSH, and L/CTSL. Participates in the regulation of hematopoietic stem cells during development and under homeostatic conditions by affecting their development, quiescence, and differentiation. In Homo sapiens (Human), this protein is Interferon gamma (IFNG).